The primary structure comprises 305 residues: MKIAIVGGPTAVGKTDIMIEVCEEIGAEIISMDSRQIYRYMDIGTAKPTSEQRRRVPHHMIDIIDPDEYYNAFMYRKDSLRAMEDVLRRGKIPVYVGGTGLYADALVRGIFEGVPADENIRKELRELERREPGILRKMLEEFDPEAATRIHPNDLKRTIRALEVYMKTGRRISELQKEAKGDDRFFIIVLTRERYELYERINKRVDKMIEMGLVDEVKRLLGMGYSKDLNSMKTIGYREVIDYLEGKYDFDKMVHLIKRNTRHFARRQIIWFKRYKEAVWYNLTFEDVGEVKEKLKKLIVENFSV.

8 to 15 is an ATP binding site; sequence GPTAVGKT. Position 10–15 (10–15) interacts with substrate; it reads TAVGKT. The interaction with substrate tRNA stretch occupies residues 33–36; sequence DSRQ.

Belongs to the IPP transferase family. In terms of assembly, monomer. Requires Mg(2+) as cofactor.

The catalysed reaction is adenosine(37) in tRNA + dimethylallyl diphosphate = N(6)-dimethylallyladenosine(37) in tRNA + diphosphate. Catalyzes the transfer of a dimethylallyl group onto the adenine at position 37 in tRNAs that read codons beginning with uridine, leading to the formation of N6-(dimethylallyl)adenosine (i(6)A). The chain is tRNA dimethylallyltransferase from Thermotoga petrophila (strain ATCC BAA-488 / DSM 13995 / JCM 10881 / RKU-1).